Reading from the N-terminus, the 131-residue chain is uncharacterized protein (131 aa).

This is an uncharacterized protein from Schizosaccharomyces pombe (strain 972 / ATCC 24843) (Fission yeast).